The following is a 480-amino-acid chain: Protein nucleotidyltransferase YdiU (480 aa).

Residues Gly84, Gly86, Arg87, Lys107, Asp119, Gly120, Arg170, and Arg177 each contribute to the ATP site. Residue Asp246 is the Proton acceptor of the active site. The Mg(2+) site is built by Asn247 and Asp256. Asp256 is an ATP binding site.

This sequence belongs to the SELO family. Mg(2+) serves as cofactor. Requires Mn(2+) as cofactor.

It carries out the reaction L-seryl-[protein] + ATP = 3-O-(5'-adenylyl)-L-seryl-[protein] + diphosphate. It catalyses the reaction L-threonyl-[protein] + ATP = 3-O-(5'-adenylyl)-L-threonyl-[protein] + diphosphate. The catalysed reaction is L-tyrosyl-[protein] + ATP = O-(5'-adenylyl)-L-tyrosyl-[protein] + diphosphate. The enzyme catalyses L-histidyl-[protein] + UTP = N(tele)-(5'-uridylyl)-L-histidyl-[protein] + diphosphate. It carries out the reaction L-seryl-[protein] + UTP = O-(5'-uridylyl)-L-seryl-[protein] + diphosphate. It catalyses the reaction L-tyrosyl-[protein] + UTP = O-(5'-uridylyl)-L-tyrosyl-[protein] + diphosphate. In terms of biological role, nucleotidyltransferase involved in the post-translational modification of proteins. It can catalyze the addition of adenosine monophosphate (AMP) or uridine monophosphate (UMP) to a protein, resulting in modifications known as AMPylation and UMPylation. The protein is Protein nucleotidyltransferase YdiU of Pseudoalteromonas atlantica (strain T6c / ATCC BAA-1087).